Reading from the N-terminus, the 338-residue chain is Putative peptide import ATP-binding protein BMEII0863 (338 aa).

Residues 10-263 (KGLRTVFRTR…PRHPYTMGLL (254 aa)) enclose the ABC transporter domain. An ATP-binding site is contributed by 43–50 (GESGSGKS).

This sequence belongs to the ABC transporter superfamily. In terms of assembly, the complex is composed of two ATP-binding proteins (BMEII0863 and BMEII0864), two transmembrane proteins (BMEII0860 and BMEII0861) and a solute-binding protein (BMEII0859).

It is found in the cell inner membrane. Its function is as follows. Probably part of an ABC transporter complex that could be involved in peptide import. Probably responsible for energy coupling to the transport system. This Brucella melitensis biotype 1 (strain ATCC 23456 / CCUG 17765 / NCTC 10094 / 16M) protein is Putative peptide import ATP-binding protein BMEII0863.